Reading from the N-terminus, the 207-residue chain is Large ribosomal subunit protein uL4 (207 aa).

The tract at residues 49–78 (HAVKNRSAVRGGGKKPWRQKGTGRARQGSI) is disordered. Positions 60–71 (GGKKPWRQKGTG) are enriched in basic residues.

Belongs to the universal ribosomal protein uL4 family. Part of the 50S ribosomal subunit.

One of the primary rRNA binding proteins, this protein initially binds near the 5'-end of the 23S rRNA. It is important during the early stages of 50S assembly. It makes multiple contacts with different domains of the 23S rRNA in the assembled 50S subunit and ribosome. Its function is as follows. Forms part of the polypeptide exit tunnel. The protein is Large ribosomal subunit protein uL4 of Ligilactobacillus salivarius (strain UCC118) (Lactobacillus salivarius).